The following is a 132-amino-acid chain: UPF0212 protein PYRAB08340 (132 aa).

The protein belongs to the UPF0212 family.

The polypeptide is UPF0212 protein PYRAB08340 (Pyrococcus abyssi (strain GE5 / Orsay)).